An 82-amino-acid chain; its full sequence is Toxin Tpa7 (82 aa).

Positions methionine 1–cysteine 20 are cleaved as a signal peptide. Residues lysine 21 to cysteine 82 form the LCN-type CS-alpha/beta domain. Disulfide bonds link cysteine 32–cysteine 82, cysteine 36–cysteine 58, cysteine 44–cysteine 63, and cysteine 48–cysteine 65.

This sequence belongs to the long (4 C-C) scorpion toxin superfamily. Sodium channel inhibitor family. Beta subfamily. As to expression, expressed by the venom gland.

Its subcellular location is the secreted. Functionally, beta toxins bind voltage-independently at site-4 of sodium channels (Nav) and shift the voltage of activation toward more negative potentials thereby affecting sodium channel activation and promoting spontaneous and repetitive firing. The protein is Toxin Tpa7 of Tityus pachyurus (Colombian scorpion).